We begin with the raw amino-acid sequence, 95 residues long: Small ribosomal subunit protein bS6 (95 aa).

It belongs to the bacterial ribosomal protein bS6 family.

Its function is as follows. Binds together with bS18 to 16S ribosomal RNA. This Acholeplasma laidlawii (strain PG-8A) protein is Small ribosomal subunit protein bS6.